An 822-amino-acid chain; its full sequence is SKI/DACH domain-containing protein 1 (822 aa).

A compositionally biased stretch (basic residues) spans 245–261 (HHHHHHHHHHHHHHHRA). The tract at residues 245–370 (HHHHHHHHHH…SSSGSSQVSV (126 aa)) is disordered. Residues 278 to 318 (PHLGSFPESCSSDSESSSYSDHAANDSDFGSSLSSSSNSVS) show a composition bias toward low complexity. Acidic residues predominate over residues 319–338 (SEEEEEEGEEEEEEEEEEEG). Lysine 602 participates in a covalent cross-link: Glycyl lysine isopeptide (Lys-Gly) (interchain with G-Cter in SUMO2). Disordered regions lie at residues 658 to 677 (ETPS…TLGS) and 706 to 732 (LQTP…THEG). Over residues 660–675 (PSLNPLAQSQGLSCTL) the composition is skewed to polar residues.

Belongs to the DACH/dachshund family.

This chain is SKI/DACH domain-containing protein 1 (Skida1), found in Mus musculus (Mouse).